Here is a 260-residue protein sequence, read N- to C-terminus: UPF0246 protein BTH_I1090 (260 aa).

This sequence belongs to the UPF0246 family.

The polypeptide is UPF0246 protein BTH_I1090 (Burkholderia thailandensis (strain ATCC 700388 / DSM 13276 / CCUG 48851 / CIP 106301 / E264)).